We begin with the raw amino-acid sequence, 154 residues long: Phosphopantetheine adenylyltransferase (154 aa).

Belongs to the eukaryotic CoaD family.

The protein localises to the cytoplasm. It catalyses the reaction (R)-4'-phosphopantetheine + ATP + H(+) = 3'-dephospho-CoA + diphosphate. The protein operates within cofactor biosynthesis; coenzyme A biosynthesis. In terms of biological role, reversibly transfers an adenylyl group from ATP to 4'-phosphopantetheine, yielding dephospho-CoA (dPCoA) and pyrophosphate. The chain is Phosphopantetheine adenylyltransferase from Methanosarcina mazei (strain ATCC BAA-159 / DSM 3647 / Goe1 / Go1 / JCM 11833 / OCM 88) (Methanosarcina frisia).